A 209-amino-acid chain; its full sequence is Uracil phosphoribosyltransferase (209 aa).

5-phospho-alpha-D-ribose 1-diphosphate-binding positions include Arg79, Arg104, and Asp131–Ser139. Residues Ile194 and Gly199–Ala201 contribute to the uracil site. Asp200 lines the 5-phospho-alpha-D-ribose 1-diphosphate pocket.

It belongs to the UPRTase family. Mg(2+) serves as cofactor.

It catalyses the reaction UMP + diphosphate = 5-phospho-alpha-D-ribose 1-diphosphate + uracil. The protein operates within pyrimidine metabolism; UMP biosynthesis via salvage pathway; UMP from uracil: step 1/1. Allosterically activated by GTP. Functionally, catalyzes the conversion of uracil and 5-phospho-alpha-D-ribose 1-diphosphate (PRPP) to UMP and diphosphate. The protein is Uracil phosphoribosyltransferase of Clostridium kluyveri (strain NBRC 12016).